The following is a 430-amino-acid chain: Probable WRKY transcription factor 14 (430 aa).

Positions 211 to 277 (SGEVVPSDLW…YTSEHNHPWP (67 aa)) form a DNA-binding region, WRKY. Residues 283-366 (LAGSTRSSTS…APYRPELHDH (84 aa)) are disordered. Over residues 286 to 306 (STRSSTSSSSNPNPSKPSTAN) the composition is skewed to low complexity. A compositionally biased stretch (polar residues) spans 307–319 (VNSSSIGSQNTIY). Acidic residues predominate over residues 340 to 354 (GDDMELENVDDDDDN).

The protein belongs to the WRKY group II-e family.

The protein localises to the nucleus. Functionally, transcription factor. Interacts specifically with the W box (5'-(T)TGAC[CT]-3'), a frequently occurring elicitor-responsive cis-acting element. The polypeptide is Probable WRKY transcription factor 14 (WRKY14) (Arabidopsis thaliana (Mouse-ear cress)).